The chain runs to 406 residues: S-adenosylmethionine synthase (406 aa).

His-5 lines the ATP pocket. Asp-7 contributes to the Mg(2+) binding site. Glu-33 contributes to the K(+) binding site. The L-methionine site is built by Glu-46 and Gln-89. The flexible loop stretch occupies residues 89 to 99; sequence QSPDIAQGVDT. Residues 164 to 166, 240 to 241, Asp-249, 255 to 256, Ala-272, and Lys-276 each bind ATP; these read DGK, KF, and RK. L-methionine is bound at residue Asp-249. Residue Lys-280 coordinates L-methionine.

This sequence belongs to the AdoMet synthase family. In terms of assembly, homotetramer; dimer of dimers. Requires Mg(2+) as cofactor. It depends on K(+) as a cofactor.

The protein localises to the cytoplasm. The enzyme catalyses L-methionine + ATP + H2O = S-adenosyl-L-methionine + phosphate + diphosphate. It participates in amino-acid biosynthesis; S-adenosyl-L-methionine biosynthesis; S-adenosyl-L-methionine from L-methionine: step 1/1. Catalyzes the formation of S-adenosylmethionine (AdoMet) from methionine and ATP. The overall synthetic reaction is composed of two sequential steps, AdoMet formation and the subsequent tripolyphosphate hydrolysis which occurs prior to release of AdoMet from the enzyme. The polypeptide is S-adenosylmethionine synthase (Synechococcus sp. (strain ATCC 27144 / PCC 6301 / SAUG 1402/1) (Anacystis nidulans)).